A 515-amino-acid chain; its full sequence is Cytoplasmic tRNA 2-thiolation protein 2 (515 aa).

Disordered stretches follow at residues 1–24 (MCQV…RPSR) and 188–217 (LGAG…ARPP). At Cys-2 the chain carries N-acetylcysteine. Phosphoserine is present on residues Ser-415, Ser-419, Ser-435, and Ser-508.

The protein belongs to the CTU2/NCS2 family. In terms of assembly, component of a complex at least composed of URM1, CTU2/NCS2 and CTU1/ATPBD3.

It is found in the cytoplasm. Its pathway is tRNA modification; 5-methoxycarbonylmethyl-2-thiouridine-tRNA biosynthesis. Its function is as follows. Plays a central role in 2-thiolation of mcm(5)S(2)U at tRNA wobble positions of tRNA(Lys), tRNA(Glu) and tRNA(Gln). May act by forming a heterodimer with CTU1/ATPBD3 that ligates sulfur from thiocarboxylated URM1 onto the uridine of tRNAs at wobble position. The sequence is that of Cytoplasmic tRNA 2-thiolation protein 2 from Homo sapiens (Human).